A 229-amino-acid chain; its full sequence is Putative N-acetylmannosamine-6-phosphate 2-epimerase (229 aa).

The protein belongs to the NanE family.

The enzyme catalyses an N-acyl-D-glucosamine 6-phosphate = an N-acyl-D-mannosamine 6-phosphate. Its pathway is amino-sugar metabolism; N-acetylneuraminate degradation; D-fructose 6-phosphate from N-acetylneuraminate: step 3/5. Converts N-acetylmannosamine-6-phosphate (ManNAc-6-P) to N-acetylglucosamine-6-phosphate (GlcNAc-6-P). The chain is Putative N-acetylmannosamine-6-phosphate 2-epimerase from Shigella dysenteriae serotype 1 (strain Sd197).